The primary structure comprises 332 residues: Polygalacturonase inhibitor 1 (332 aa).

A signal peptide spans 1–24 (MASTASFMLAVLLAVAVAAAPARA). 2 disulfide bridges follow: Cys27/Cys58 and Cys59/Cys66. LRR repeat units lie at residues 72-96 (VNNV…GLTA), 97-118 (LMSL…CLTA), 119-142 (LSNL…SLAR), 143-166 (IRSL…SFSD), 167-192 (LPNL…VQGQ), 193-215 (FRSL…AQDE), 216-236 (INTV…LFAA), 237-259 (GRPI…KLVF), 260-283 (PPEL…SLAA), and 284-310 (LSTL…VIRH). Residue Asn131 is glycosylated (N-linked (GlcNAc...) asparagine). 3 cysteine pairs are disulfide-bonded: Cys298/Cys312, Cys298/Cys320, and Cys320/Cys329.

This sequence belongs to the polygalacturonase-inhibiting protein family. Highly expressed in calli, immature and mature panicles, and in three inner floral organs: lodicules, stamens and carpels. Expressed at low level in seedling roots and mature stems.

The protein localises to the secreted. Its subcellular location is the cell wall. Functionally, inhibitor of fungal polygalacturonase. Regulates floral organ number. This chain is Polygalacturonase inhibitor 1, found in Oryza sativa subsp. japonica (Rice).